The sequence spans 238 residues: MRPSQRSADAMRVVRLTRSYTKHAEGSVLVEFGDTKVICTASVEETVPSFLKGKGQGWVTAEYGMLPRSTGSRMRRESAAGKQSGRTQEIQRLIGRSLRAVTDLAKLGERQIVIDCDVIQADGGTRTASITGAYVALADAIRGLIDAGKLSATPLRDQVAAVSVGVYKGQPVLDLDYLEDSDCETDMNVVMTGSGRFVEVQGTAEGEPFSEEEMAAMLGLARKGIAELLAHQRQALNV.

Residues R86 and 124-126 contribute to the phosphate site; that span reads GTR.

This sequence belongs to the RNase PH family. Homohexameric ring arranged as a trimer of dimers.

The enzyme catalyses tRNA(n+1) + phosphate = tRNA(n) + a ribonucleoside 5'-diphosphate. Its function is as follows. Phosphorolytic 3'-5' exoribonuclease that plays an important role in tRNA 3'-end maturation. Removes nucleotide residues following the 3'-CCA terminus of tRNAs; can also add nucleotides to the ends of RNA molecules by using nucleoside diphosphates as substrates, but this may not be physiologically important. Probably plays a role in initiation of 16S rRNA degradation (leading to ribosome degradation) during starvation. The protein is Ribonuclease PH of Chromobacterium violaceum (strain ATCC 12472 / DSM 30191 / JCM 1249 / CCUG 213 / NBRC 12614 / NCIMB 9131 / NCTC 9757 / MK).